The following is a 144-amino-acid chain: 3-dehydroquinate dehydratase (144 aa).

Y23 acts as the Proton acceptor in catalysis. Substrate contacts are provided by N74, H80, and D87. The active-site Proton donor is the H100. Substrate-binding positions include 101 to 102 (LS) and R111.

Belongs to the type-II 3-dehydroquinase family. In terms of assembly, homododecamer.

The catalysed reaction is 3-dehydroquinate = 3-dehydroshikimate + H2O. The protein operates within metabolic intermediate biosynthesis; chorismate biosynthesis; chorismate from D-erythrose 4-phosphate and phosphoenolpyruvate: step 3/7. Functionally, catalyzes a trans-dehydration via an enolate intermediate. This is 3-dehydroquinate dehydratase from Haemophilus ducreyi (strain 35000HP / ATCC 700724).